Reading from the N-terminus, the 930-residue chain is Translation initiation factor IF-2 (930 aa).

The disordered stretch occupies residues 51-325 (PGAGKSAAKP…TREIGGVKVP (275 aa)). Low complexity-rich tracts occupy residues 56 to 111 (SAAK…KPGV) and 121 to 162 (TPAA…GNNP). Positions 263-295 (RPGGGPGGGPGRPGGPGGRGGRGNAQGAFGRGG) are enriched in gly residues. The segment covering 296-307 (GPRKGRKSKRAK) has biased composition (basic residues). Positions 308-320 (RQEFEQQHTREIG) are enriched in basic and acidic residues. The tr-type G domain maps to 422 to 596 (PRPAVVTVMG…LTADAALELT (175 aa)). The segment at 431-438 (GHVDHGKT) is G1. Residue 431–438 (GHVDHGKT) coordinates GTP. The interval 456 to 460 (GITQH) is G2. The tract at residues 481-484 (DTPG) is G3. Residues 481–485 (DTPGH) and 535–538 (NKID) each bind GTP. Positions 535–538 (NKID) are G4. Positions 571-573 (SAR) are G5.

It belongs to the TRAFAC class translation factor GTPase superfamily. Classic translation factor GTPase family. IF-2 subfamily.

The protein localises to the cytoplasm. One of the essential components for the initiation of protein synthesis. Protects formylmethionyl-tRNA from spontaneous hydrolysis and promotes its binding to the 30S ribosomal subunits. Also involved in the hydrolysis of GTP during the formation of the 70S ribosomal complex. This is Translation initiation factor IF-2 from Micrococcus luteus (strain ATCC 4698 / DSM 20030 / JCM 1464 / CCM 169 / CCUG 5858 / IAM 1056 / NBRC 3333 / NCIMB 9278 / NCTC 2665 / VKM Ac-2230) (Micrococcus lysodeikticus).